A 77-amino-acid chain; its full sequence is Conotoxin Cl6.12 (77 aa).

The N-terminal stretch at 1–20 (MKFYLLLTAALLLTAVIIEA) is a signal peptide. Positions 21 to 36 (APTDHQDEARDLMREE) are excised as a propeptide. Cystine bridges form between Cys43–Cys58, Cys51–Cys62, and Cys57–Cys68.

Expressed by the venom duct.

The protein resides in the secreted. The sequence is that of Conotoxin Cl6.12 from Californiconus californicus (California cone).